The primary structure comprises 165 residues: Crossover junction endodeoxyribonuclease RuvC (165 aa).

Catalysis depends on residues Asp-8, Glu-69, and His-141. Positions 8, 69, and 141 each coordinate Mg(2+).

The protein belongs to the RuvC family. As to quaternary structure, homodimer which binds Holliday junction (HJ) DNA. The HJ becomes 2-fold symmetrical on binding to RuvC with unstacked arms; it has a different conformation from HJ DNA in complex with RuvA. In the full resolvosome a probable DNA-RuvA(4)-RuvB(12)-RuvC(2) complex forms which resolves the HJ. It depends on Mg(2+) as a cofactor.

The protein resides in the cytoplasm. The enzyme catalyses Endonucleolytic cleavage at a junction such as a reciprocal single-stranded crossover between two homologous DNA duplexes (Holliday junction).. Its function is as follows. The RuvA-RuvB-RuvC complex processes Holliday junction (HJ) DNA during genetic recombination and DNA repair. Endonuclease that resolves HJ intermediates. Cleaves cruciform DNA by making single-stranded nicks across the HJ at symmetrical positions within the homologous arms, yielding a 5'-phosphate and a 3'-hydroxyl group; requires a central core of homology in the junction. The consensus cleavage sequence is 5'-(A/T)TT(C/G)-3'. Cleavage occurs on the 3'-side of the TT dinucleotide at the point of strand exchange. HJ branch migration catalyzed by RuvA-RuvB allows RuvC to scan DNA until it finds its consensus sequence, where it cleaves and resolves the cruciform DNA. The sequence is that of Crossover junction endodeoxyribonuclease RuvC from Wolbachia pipientis subsp. Culex pipiens (strain wPip).